A 257-amino-acid polypeptide reads, in one-letter code: Zinc transporter ZupT (257 aa).

8 helical membrane-spanning segments follow: residues 5-25 (LILT…GVLG), 32-52 (LLAF…LMEM), 61-81 (GMSP…YFGL), 109-129 (AILL…ATFV), 137-157 (LGFG…LAVA), 171-191 (ILWA…AWLI), 195-215 (MISP…MVAL), and 236-256 (GVLC…TAGI). Asn120 and Glu123 together coordinate Fe(2+). 2 residues coordinate Zn(2+): Glu123 and His148. Asn149, Glu152, and Glu181 together coordinate Fe(2+). Zn(2+) is bound at residue Glu152.

It belongs to the ZIP transporter (TC 2.A.5) family. ZupT subfamily.

The protein resides in the cell inner membrane. The catalysed reaction is Zn(2+)(in) = Zn(2+)(out). In terms of biological role, mediates zinc uptake. May also transport other divalent cations. This is Zinc transporter ZupT from Shigella flexneri serotype 5b (strain 8401).